The sequence spans 158 residues: Cyclic pyranopterin monophosphate synthase (158 aa).

Substrate contacts are provided by residues 74–76 and 112–113; these read MCH and ME. Asp127 is an active-site residue.

Belongs to the MoaC family. Homohexamer; trimer of dimers.

The catalysed reaction is (8S)-3',8-cyclo-7,8-dihydroguanosine 5'-triphosphate = cyclic pyranopterin phosphate + diphosphate. It functions in the pathway cofactor biosynthesis; molybdopterin biosynthesis. In terms of biological role, catalyzes the conversion of (8S)-3',8-cyclo-7,8-dihydroguanosine 5'-triphosphate to cyclic pyranopterin monophosphate (cPMP). The chain is Cyclic pyranopterin monophosphate synthase from Helicobacter pylori (strain P12).